The sequence spans 208 residues: Ypt/Rab-type GTPase ypt71 (208 aa).

Residues Ser17 to Cys23, Phe33 to Thr40, Gly66, Asn124 to Asp127, and Ser158 to Lys160 each bind GTP. The Effector region motif lies at Tyr37 to Phe45. S-geranylgeranyl cysteine attachment occurs at residues Cys206 and Cys208. Cys208 is modified (cysteine methyl ester).

The protein belongs to the small GTPase superfamily. Rab family.

It is found in the vacuole membrane. With respect to regulation, rab activation is generally mediated by a guanine exchange factor (GEF), while inactivation through hydrolysis of bound GTP is catalyzed by a GTPase activating protein (GAP). Ypt/Rab-type GTPases are key regulators of membrane trafficking and intracellular vesicular transport. They act as molecular switches that convert between GTP-bound and GDP-bound states, and regulate virtually all steps of membrane traffic from the formation of the transport vesicle at the donor membrane to its fusion at the target membrane. In the GDP-bound state, Ypt proteins are predominantly cytosolic, solubilized through the interaction with a GDP dissociation inhibitor (GDI). In the GTP-bound state, the proteins are membrane bound and interact with specific effector proteins that select cargo, promote vesicle movement, or verify the correct site of fusion. Act antagonistically to ypt7 in regulating vacuolar morphology, promoting vacuolar fission. This Schizosaccharomyces pombe (strain 972 / ATCC 24843) (Fission yeast) protein is Ypt/Rab-type GTPase ypt71 (ypt71).